Reading from the N-terminus, the 268-residue chain is Indole-3-glycerol phosphate synthase 2 (268 aa).

Belongs to the TrpC family.

The enzyme catalyses 1-(2-carboxyphenylamino)-1-deoxy-D-ribulose 5-phosphate + H(+) = (1S,2R)-1-C-(indol-3-yl)glycerol 3-phosphate + CO2 + H2O. It participates in amino-acid biosynthesis; L-tryptophan biosynthesis; L-tryptophan from chorismate: step 4/5. This is Indole-3-glycerol phosphate synthase 2 (trpC2) from Ralstonia nicotianae (strain ATCC BAA-1114 / GMI1000) (Ralstonia solanacearum).